Here is a 560-residue protein sequence, read N- to C-terminus: Membrane protein insertase YidC (560 aa).

The helical transmembrane segment at 1–21 threads the bilayer; sequence MDIKRTILIAALAIVSYVMVL. A disordered region spans residues 42 to 66; it reads VAPGLPDGVPAANNGASADVPSANA. Helical transmembrane passes span 341 to 361, 367 to 387, 437 to 457, 468 to 488, and 515 to 535; these read LELT…FWLL, LLGN…GLFF, LGGC…YWVL, WMLW…PIIM, and PIIF…YWVV.

This sequence belongs to the OXA1/ALB3/YidC family. Type 1 subfamily. Interacts with the Sec translocase complex via SecD. Specifically interacts with transmembrane segments of nascent integral membrane proteins during membrane integration.

The protein localises to the cell inner membrane. In terms of biological role, required for the insertion and/or proper folding and/or complex formation of integral membrane proteins into the membrane. Involved in integration of membrane proteins that insert both dependently and independently of the Sec translocase complex, as well as at least some lipoproteins. Aids folding of multispanning membrane proteins. This Pseudomonas putida (strain W619) protein is Membrane protein insertase YidC.